Consider the following 519-residue polypeptide: Serine/threonine-protein kinase RIO3 (519 aa).

Phosphoserine is present on residues Ser8, Ser112, Ser125, Ser127, and Ser128. Residues 122 to 159 are disordered; the sequence is FEDSDSSEDEVDWQDTRDDPYRPAKPIPTPKKGFIGKG. The segment covering 124 to 134 has biased composition (acidic residues); it reads DSDSSEDEVDW. A Protein kinase domain is found at 251–519; it reads ETITGCISTG…DGSPPVLSAD (269 aa). ATP is bound by residues 257–265 and Lys290; that span reads ISTGKESVV. Catalysis depends on Asp406, which acts as the Proton acceptor. Ser512 carries the phosphoserine modification.

It belongs to the protein kinase superfamily. RIO-type Ser/Thr kinase family. As to quaternary structure, interacts with CASP10. Interacts with IRF3; RIOK3 probably mediates the interaction of TBK1 with IRF3. Associated with 40S pre-ribosomal particles. The cofactor is Mg(2+). Autophosphorylated (in vitro).

The protein localises to the cytoplasm. It catalyses the reaction L-seryl-[protein] + ATP = O-phospho-L-seryl-[protein] + ADP + H(+). The enzyme catalyses L-threonyl-[protein] + ATP = O-phospho-L-threonyl-[protein] + ADP + H(+). In terms of biological role, involved in regulation of type I interferon (IFN)-dependent immune response which plays a critical role in the innate immune response against DNA and RNA viruses. May act as an adapter protein essential for the recruitment of TBK1 to IRF3. Phosphorylates IFIH1 on 'Ser-828' interfering with IFIH1 filament assembly on long dsRNA and resulting in attenuated IFIH1-signaling. Can inhibit CASP10 isoform 7-mediated activation of the NF-kappaB signaling pathway. May play a role in the biogenesis of the 40S ribosomal subunit. Involved in the processing of 21S pre-rRNA to the mature 18S rRNA. The chain is Serine/threonine-protein kinase RIO3 (Riok3) from Mus musculus (Mouse).